The primary structure comprises 222 residues: 3-dehydroquinate dehydratase (222 aa).

Residues 29 to 31 (ELR) and arginine 55 each bind 3-dehydroquinate. Histidine 112 acts as the Proton donor/acceptor in catalysis. The active-site Schiff-base intermediate with substrate is lysine 139. 3-dehydroquinate contacts are provided by arginine 178, serine 199, and glutamine 203.

It belongs to the type-I 3-dehydroquinase family. Homodimer.

It carries out the reaction 3-dehydroquinate = 3-dehydroshikimate + H2O. It participates in metabolic intermediate biosynthesis; chorismate biosynthesis; chorismate from D-erythrose 4-phosphate and phosphoenolpyruvate: step 3/7. Involved in the third step of the chorismate pathway, which leads to the biosynthesis of aromatic amino acids. Catalyzes the cis-dehydration of 3-dehydroquinate (DHQ) and introduces the first double bond of the aromatic ring to yield 3-dehydroshikimate. In Dehalococcoides mccartyi (strain ATCC BAA-2266 / KCTC 15142 / 195) (Dehalococcoides ethenogenes (strain 195)), this protein is 3-dehydroquinate dehydratase.